Reading from the N-terminus, the 255-residue chain is 3-alpha-(or 20-beta)-hydroxysteroid dehydrogenase (255 aa).

10–34 provides a ligand contact to NAD(+); sequence IITGGARGLGAEAARQAVAAGARVV. Residue Ser139 coordinates substrate. Tyr152 functions as the Proton acceptor in the catalytic mechanism.

This sequence belongs to the short-chain dehydrogenases/reductases (SDR) family. In terms of assembly, homotetramer.

It catalyses the reaction androstan-3alpha,17beta-diol + NAD(+) = 17beta-hydroxyandrostanone + NADH + H(+). Its pathway is lipid metabolism; C21-steroid hormone metabolism. This is 3-alpha-(or 20-beta)-hydroxysteroid dehydrogenase from Streptomyces exfoliatus (Streptomyces hydrogenans).